Here is a 285-residue protein sequence, read N- to C-terminus: Cytochrome c1 (285 aa).

The first 22 residues, 1–22, serve as a signal peptide directing secretion; that stretch reads MIRKLTLTAATALALSGGAAMA. Residues Cys-58, Cys-61, His-62, and Met-207 each coordinate heme c. Residues 251-269 traverse the membrane as a helical segment; it reads AGFTAVMFLTVLSVLLYLT.

As to quaternary structure, the main subunits of complex b-c1 are: cytochrome b, cytochrome c1 and the Rieske protein. Post-translationally, binds 1 heme c group covalently per subunit.

The protein resides in the cell membrane. In terms of biological role, component of the ubiquinol-cytochrome c reductase complex (complex III or cytochrome b-c1 complex), which is a respiratory chain that generates an electrochemical potential coupled to ATP synthesis. c1 functions as an electron donor to cytochrome c. In Cereibacter sphaeroides (Rhodobacter sphaeroides), this protein is Cytochrome c1 (petC).